The chain runs to 276 residues: MDSAREPTQGSLDAAGFWQVWQRFDVEEKGYIEEKELDAFFYHMLTKLGVDDAVKEENVQKMKQQFMAPHDVSKDGCIQMKELAGMFLSEDENFLLLFRQETPLDSSVEFMRIWRKYDADSSGFISAAELCNFLRDLFLHHKKAISEAKLEEYTGTMMKIFDKNKDGRLDLNDLARILALQENFLLQFKMDACSSEERKRDFEKIFAHYDVSKTGALEGPEVDGFVKDMMELVQPSIRGVDLDKFREILLRHCDVNKDGKIQKSELALCLGLKINP.

EF-hand domains lie at 12–47, 71–93, 105–140, 149–184, 197–232, and 240–276; these read LDAA…MLTK, DVSK…EDEN, DSSV…LFLH, KLEE…QENF, ERKR…MMEL, and VDLD…KINP. Ca(2+)-binding residues include Asp-71, Ser-73, Asp-75, Cys-77, Glu-82, Asp-118, Asp-120, Ser-122, Glu-129, Asp-162, Asn-164, Asp-166, Arg-168, Asp-173, Asp-210, Ser-212, Thr-214, Glu-221, Asp-254, Asn-256, Asp-258, Lys-260, and Glu-265.

The protein localises to the cytoplasm. The protein resides in the secreted. It localises to the cytoplasmic vesicle. It is found in the secretory vesicle membrane. The sequence is that of Secretagogin (SCGN) from Bos taurus (Bovine).